The following is a 562-amino-acid chain: Arginine--tRNA ligase (562 aa).

The 'HIGH' region signature appears at 129 to 139; that stretch reads ANPTGPLHVGH.

This sequence belongs to the class-I aminoacyl-tRNA synthetase family. In terms of assembly, monomer.

It is found in the cytoplasm. The enzyme catalyses tRNA(Arg) + L-arginine + ATP = L-arginyl-tRNA(Arg) + AMP + diphosphate. In Xylella fastidiosa (strain M23), this protein is Arginine--tRNA ligase.